Here is a 101-residue protein sequence, read N- to C-terminus: NAD(P)H-quinone oxidoreductase subunit 4L, chloroplastic (101 aa).

A run of 3 helical transmembrane segments spans residues 2–22 (MLEHVLVLSAYLFSIGIYGLI), 32–52 (MCLELILNAVNINFVTFSDFF), and 61–81 (IFSIFVIAIAAAEAAIGPAIV).

It belongs to the complex I subunit 4L family. NDH is composed of at least 16 different subunits, 5 of which are encoded in the nucleus.

Its subcellular location is the plastid. The protein resides in the chloroplast thylakoid membrane. It catalyses the reaction a plastoquinone + NADH + (n+1) H(+)(in) = a plastoquinol + NAD(+) + n H(+)(out). It carries out the reaction a plastoquinone + NADPH + (n+1) H(+)(in) = a plastoquinol + NADP(+) + n H(+)(out). In terms of biological role, NDH shuttles electrons from NAD(P)H:plastoquinone, via FMN and iron-sulfur (Fe-S) centers, to quinones in the photosynthetic chain and possibly in a chloroplast respiratory chain. The immediate electron acceptor for the enzyme in this species is believed to be plastoquinone. Couples the redox reaction to proton translocation, and thus conserves the redox energy in a proton gradient. The polypeptide is NAD(P)H-quinone oxidoreductase subunit 4L, chloroplastic (Morus indica (Mulberry)).